A 177-amino-acid chain; its full sequence is Nucleoside triphosphate/diphosphate phosphatase (177 aa).

Catalysis depends on Arg-23, which acts as the Proton donor. Mg(2+)-binding residues include Asn-87, Asp-103, Asp-105, Asp-107, Asp-120, and Glu-123.

The protein belongs to the Ntdp family. Requires Mg(2+) as cofactor.

It carries out the reaction a ribonucleoside 5'-triphosphate + H2O = a ribonucleoside 5'-diphosphate + phosphate + H(+). The catalysed reaction is a ribonucleoside 5'-diphosphate + H2O = a ribonucleoside 5'-phosphate + phosphate + H(+). Its function is as follows. Has nucleoside phosphatase activity towards nucleoside triphosphates and nucleoside diphosphates. The protein is Nucleoside triphosphate/diphosphate phosphatase of Streptococcus suis (strain 98HAH33).